The following is a 67-amino-acid chain: Cold shock protein (67 aa).

In terms of domain architecture, CSD spans 4 to 64 (GTVKWFNAEK…GAKGPQATGV (61 aa)).

The protein resides in the cytoplasm. This is Cold shock protein (csp) from Arthrobacter globiformis.